The sequence spans 376 residues: Sulfate/thiosulfate import ATP-binding protein CysA (376 aa).

The ABC transporter domain occupies 3–237 (IRLDNISKHF…PNSRFVFDFF (235 aa)). Position 35-42 (35-42 (GPSGSGKT)) interacts with ATP.

This sequence belongs to the ABC transporter superfamily. Sulfate/tungstate importer (TC 3.A.1.6) family. The complex is composed of two ATP-binding proteins (CysA), two transmembrane proteins (CysT and CysW) and a solute-binding protein (CysP).

Its subcellular location is the cell inner membrane. The enzyme catalyses sulfate(out) + ATP + H2O = sulfate(in) + ADP + phosphate + H(+). It catalyses the reaction thiosulfate(out) + ATP + H2O = thiosulfate(in) + ADP + phosphate + H(+). Functionally, part of the ABC transporter complex CysAWTP involved in sulfate/thiosulfate import. Responsible for energy coupling to the transport system. This Vibrio cholerae serotype O1 (strain ATCC 39315 / El Tor Inaba N16961) protein is Sulfate/thiosulfate import ATP-binding protein CysA.